Consider the following 225-residue polypeptide: Pathogenesis-related thaumatin-like protein 3.8 (225 aa).

A signal peptide spans 1 to 26 (MAKVSDLALLLVAGMAISLYIQETGA). Intrachain disulfides connect Cys35/Cys224, Cys76/Cys86, Cys91/Cys97, Cys139/Cys213, Cys144/Cys197, Cys152/Cys162, Cys166/Cys175, and Cys176/Cys184. The N-linked (GlcNAc...) asparagine glycan is linked to Asn188.

Belongs to the thaumatin family.

In terms of biological role, may be involved in disease resistance. The sequence is that of Pathogenesis-related thaumatin-like protein 3.8 from Cryptomeria japonica (Japanese cedar).